We begin with the raw amino-acid sequence, 429 residues long: Serum response factor-binding protein 1 (429 aa).

Alanine 2 bears the N-acetylalanine mark. Coiled coils occupy residues 42-67 (KGTE…AMKE) and 108-146 (LLKK…NHSE). Disordered regions lie at residues 131 to 157 (AEVE…NGSN) and 176 to 429 (LAKK…TFDD). The span at 146–157 (ENTLYSNDNGSN) shows a compositional bias: polar residues. Over residues 183–195 (NSKEKIAKMEHGP) the composition is skewed to basic and acidic residues. Lysine 190 participates in a covalent cross-link: Glycyl lysine isopeptide (Lys-Gly) (interchain with G-Cter in SUMO2). Phosphoserine occurs at positions 203, 205, 264, 279, and 281. Over residues 249-265 (GGEEFCEEEKEYFDDST) the composition is skewed to acidic residues. Positions 296–341 (KESSCHSSVKEQKPLEKVFLKEDTGETHGDTRNDKIKPSTETRKLE) are enriched in basic and acidic residues. A Glycyl lysine isopeptide (Lys-Gly) (interchain with G-Cter in SUMO2) cross-link involves residue lysine 316. 3 positions are modified to phosphoserine: serine 349, serine 351, and serine 367. Positions 357–367 (NFKEQAPKTRS) are enriched in basic and acidic residues. The segment covering 373–383 (NEPQIKNQFNK) has biased composition (polar residues).

Interacts with SRF. Forms complexes with SRF and SRF cofactors ARID2, MYOCD and NKX2-5. Interacts with the N-terminus of SLC2A4. In terms of tissue distribution, abundantly expressed in heart and skeletal muscle, and at much lower levels in brain and lung.

It localises to the cytoplasm. The protein resides in the perinuclear region. May be involved in regulating transcriptional activation of cardiac genes during the aging process. May play a role in biosynthesis and/or processing of SLC2A4 in adipose cells. The protein is Serum response factor-binding protein 1 of Homo sapiens (Human).